The sequence spans 620 residues: Chaperone protein DnaK (620 aa).

Threonine 197 bears the Phosphothreonine; by autocatalysis mark. The disordered stretch occupies residues 597-620 (AMANKNNAEQPKKKDDDVIDAEVE).

Belongs to the heat shock protein 70 family.

Acts as a chaperone. This is Chaperone protein DnaK from Helicobacter acinonychis (strain Sheeba).